The chain runs to 132 residues: MIVRNLTEARDSNRRIVSPDGNWESTRMLLKDDKMGFSFHITTIYKGADFRMHYQNHLESVYCVRGRGEVETLADGKKYPIEPGTLYILDKHDEHMLRAFEEMEMACVFNPPLNGTEVHNAEGAYELNAEAL.

The protein belongs to the ectoine synthase family.

It carries out the reaction (2S)-4-acetamido-2-aminobutanoate = L-ectoine + H2O. It functions in the pathway amine and polyamine biosynthesis; ectoine biosynthesis; L-ectoine from L-aspartate 4-semialdehyde: step 3/3. Its function is as follows. Catalyzes the circularization of gamma-N-acetyl-alpha,gamma-diaminobutyric acid (ADABA) to ectoine (1,4,5,6-tetrahydro-2-methyl-4-pyrimidine carboxylic acid), which is an excellent osmoprotectant. The chain is L-ectoine synthase from Teredinibacter turnerae (strain ATCC 39867 / T7901).